Reading from the N-terminus, the 187-residue chain is Orotate phosphoribosyltransferase (187 aa).

5-phospho-alpha-D-ribose 1-diphosphate contacts are provided by residues Arg-98, Lys-99, Lys-102, His-104, and 128 to 136; that span reads EDVTTTGGS. Residues Thr-132 and Arg-160 each contribute to the orotate site.

The protein belongs to the purine/pyrimidine phosphoribosyltransferase family. PyrE subfamily. As to quaternary structure, homodimer. The cofactor is Mg(2+).

The enzyme catalyses orotidine 5'-phosphate + diphosphate = orotate + 5-phospho-alpha-D-ribose 1-diphosphate. It participates in pyrimidine metabolism; UMP biosynthesis via de novo pathway; UMP from orotate: step 1/2. Its function is as follows. Catalyzes the transfer of a ribosyl phosphate group from 5-phosphoribose 1-diphosphate to orotate, leading to the formation of orotidine monophosphate (OMP). The polypeptide is Orotate phosphoribosyltransferase (Rhodopseudomonas palustris (strain BisB5)).